We begin with the raw amino-acid sequence, 891 residues long: DNA mismatch repair protein MutS (891 aa).

643-650 (GPNMGGKS) contributes to the ATP binding site.

The protein belongs to the DNA mismatch repair MutS family.

Its function is as follows. This protein is involved in the repair of mismatches in DNA. It is possible that it carries out the mismatch recognition step. This protein has a weak ATPase activity. The polypeptide is DNA mismatch repair protein MutS (Xanthomonas campestris pv. campestris (strain ATCC 33913 / DSM 3586 / NCPPB 528 / LMG 568 / P 25)).